A 338-amino-acid chain; its full sequence is Fructose-1,6-bisphosphatase 1 (338 aa).

The residue at position 2 (A2) is an N-acetylalanine. Residues 18-22 and 28-32 each bind AMP; these read VMEQG and TGELT. Mg(2+) contacts are provided by D69 and E98. 113–114 is a binding site for AMP; that stretch reads KY. Residues D119, L121, and D122 each contribute to the Mg(2+) site. Substrate is bound at residue 122-125; sequence DGSS. Residue R141 participates in AMP binding. K151 is modified (N6-succinyllysine). Residues 213-216, 244-249, Y265, and 275-277 contribute to the substrate site; these read NEGY, RYVGSM, and KLR. A phosphotyrosine mark is found at Y216, Y245, and Y265. Residue E281 participates in Mg(2+) binding.

The protein belongs to the FBPase class 1 family. Homotetramer. Mg(2+) is required as a cofactor. As to expression, detected in pancreatic beta-cell lines MIN6 and beta-TC and in liver (at protein level). Preferentially expressed in liver, with lower levels detected in pancreatic islets and intestine, and very low levels in blood, muscle, brain and spleen.

The enzyme catalyses beta-D-fructose 1,6-bisphosphate + H2O = beta-D-fructose 6-phosphate + phosphate. It participates in carbohydrate biosynthesis; gluconeogenesis. With respect to regulation, subject to complex allosteric regulation. The enzyme can assume an active R-state, or an inactive T-state. Intermediate conformations may exist. AMP acts as an allosteric inhibitor. AMP binding affects the turnover of bound substrate and not the affinity for substrate. Fructose 2,6-bisphosphate acts as a competitive inhibitor. Fructose 2,6-bisphosphate and AMP have synergistic effects. Catalyzes the hydrolysis of fructose 1,6-bisphosphate to fructose 6-phosphate in the presence of divalent cations, acting as a rate-limiting enzyme in gluconeogenesis. Plays a role in regulating glucose sensing and insulin secretion of pancreatic beta-cells. Appears to modulate glycerol gluconeogenesis in liver. Important regulator of appetite and adiposity; increased expression of the protein in liver after nutrient excess increases circulating satiety hormones and reduces appetite-stimulating neuropeptides and thus seems to provide a feedback mechanism to limit weight gain. The sequence is that of Fructose-1,6-bisphosphatase 1 (Fbp1) from Mus musculus (Mouse).